Consider the following 125-residue polypeptide: MSTAVTEGIEVTVRSTFRPERSEPGRFLFSYTVRIANQGEVPAQLVSRRWIILDANGEREEVVGDGVVGQQPHLEPGEHFEYTSFCVLKTPHGSMRGTYRMVRDGGQAFDATIAPFPLVVPGTLN.

Residues 3-125 (TAVTEGIEVT…FPLVVPGTLN (123 aa)) form the ApaG domain.

This chain is Protein ApaG, found in Anaeromyxobacter sp. (strain K).